A 184-amino-acid polypeptide reads, in one-letter code: UPF0397 protein SA2477 (184 aa).

The next 5 membrane-spanning stretches (helical) occupy residues V11–P31, A44–V64, A77–L97, M111–P131, and Q148–L168.

Belongs to the UPF0397 family.

It localises to the cell membrane. The polypeptide is UPF0397 protein SA2477 (Staphylococcus aureus (strain N315)).